Consider the following 155-residue polypeptide: Troponin C, body wall muscle (155 aa).

An N-acetylvaline modification is found at V1. 4 EF-hand domains span residues 7–43, 44–79, 88–121, and 122–155; these read DEKS…LGQN, PTEK…QMQA, REEK…TGEN, and VETW…KFVQ. Ca(2+) contacts are provided by D57, D59, S61, T63, and E68. Ca(2+) is bound by residues D135, N137, D139, Q141, and E146.

Belongs to the troponin C family.

In terms of biological role, troponin is the central regulatory protein of muscle contraction. Tn consists of three components: Tn-I which is the inhibitor of actomyosin ATPase, Tn-T which contains the binding site for tropomyosin and Tn-C. The binding of calcium to Tn-C abolishes the inhibitory action of Tn on actin filaments. The sequence is that of Troponin C, body wall muscle from Halocynthia roretzi (Sea squirt).